A 298-amino-acid polypeptide reads, in one-letter code: Enoyl-CoA hydratase ACTT6 (298 aa).

It belongs to the enoyl-CoA hydratase/isomerase family.

It functions in the pathway mycotoxin biosynthesis. Enoyl-CoA hydratase; part of the gene clusters that mediate the biosynthesis of the host-selective toxins (HSTs) ACT-toxins responsible for brown spot of tangerine disease by the tangerine pathotype which affects tangerines and mandarins. ACT-toxins consist of three moieties, 9,10-epoxy-8-hydroxy-9-methyl-decatrienoic acid (EDA), valine and a polyketide. ACT-toxin I is toxic to both citrus and pear; toxin II the 5''-deoxy derivative of ACT-toxin I, is highly toxic to pear and slightly toxic to citrus. On cellular level, ACT-toxins affect plasma membrane of susceptible cells and cause a sudden increase in loss of K(+) after a few minutes of toxin treatment. The acyl-CoA ligase ACTT1, the hydrolase ACTT2, the enoyl-CoA hydratases ACTT3 and ACTT6, and the acyl-CoA synthetase ACTT5 are all involved in the biosynthesis of the AK-, AF- and ACT-toxin common 9,10-epoxy-8-hydroxy-9-methyl-decatrienoic acid (EDA) structural moiety. The exact role of each enzyme, and of additional enzymes identified within the AF-toxin clusters have still to be determined. On the other hand, ACTTS1 to ACTTS4 are specific to the tangerine pathotype. The function of ACTTS3 is to elongate the polyketide chain portion of ACT-toxin that is unique to this toxin. The enoyl-reductase ACTTS2 might complement the missing enoyl-reductase (ER) domain in ACTTS3 in the synthesis of the polyketide portion of ACT-toxin. The roles of the nonribosomal peptide synthetases-related proteins ACTTS1 and ACTTS4 have also still not been elucidated. The polypeptide is Enoyl-CoA hydratase ACTT6 (Alternaria alternata (Alternaria rot fungus)).